A 493-amino-acid polypeptide reads, in one-letter code: Glutamyl-tRNA(Gln) amidotransferase subunit A (493 aa).

Catalysis depends on charge relay system residues K78 and S158. Residue S182 is the Acyl-ester intermediate of the active site.

It belongs to the amidase family. GatA subfamily. Heterotrimer of A, B and C subunits.

It catalyses the reaction L-glutamyl-tRNA(Gln) + L-glutamine + ATP + H2O = L-glutaminyl-tRNA(Gln) + L-glutamate + ADP + phosphate + H(+). In terms of biological role, allows the formation of correctly charged Gln-tRNA(Gln) through the transamidation of misacylated Glu-tRNA(Gln) in organisms which lack glutaminyl-tRNA synthetase. The reaction takes place in the presence of glutamine and ATP through an activated gamma-phospho-Glu-tRNA(Gln). The chain is Glutamyl-tRNA(Gln) amidotransferase subunit A from Rickettsia africae (strain ESF-5).